The chain runs to 456 residues: Chitobiosyldiphosphodolichol beta-mannosyltransferase (456 aa).

Residues 1–22 (MGEIIKYKGFDHVWQYSGPWLY) are Lumenal-facing. The helical transmembrane segment at 23 to 43 (CLIGIYISLPVLAYHILPWIF) threads the bilayer. Residues 44–103 (HKNRSNKRKTISIFVLGDLGHSPRMCYHASSFSKLDYYVNLCGYVETEPSHQIVDDVNID) lie on the Cytoplasmic side of the membrane. Positions 104 to 124 (IIPIEAIKNTNNLPYIMFAIL) form an intramembrane region, helical. Topologically, residues 125-456 (KVVRQCGKIW…TFSSIFENKS (332 aa)) are cytoplasmic.

Belongs to the glycosyltransferase group 1 family.

The protein localises to the endoplasmic reticulum membrane. It carries out the reaction an N,N'-diacetylchitobiosyl-diphospho-di-trans,poly-cis-dolichol + GDP-alpha-D-mannose = a beta-D-Man-(1-&gt;4)-beta-D-GlcNAc-(1-&gt;4)-alpha-D-GlcNAc-diphospho-di-trans,poly-cis-dolichol + GDP + H(+). The protein operates within protein modification; protein glycosylation. Functionally, participates in the formation of the lipid-linked precursor oligosaccharide for N-glycosylation. Involved in assembling the dolichol-pyrophosphate-GlcNAc(2)-Man(5) intermediate on the cytoplasmic surface of the ER. This chain is Chitobiosyldiphosphodolichol beta-mannosyltransferase (ALG1), found in Candida albicans (strain SC5314 / ATCC MYA-2876) (Yeast).